Reading from the N-terminus, the 221-residue chain is GTP cyclohydrolase III (221 aa).

The protein belongs to the archaeal-type GTP cyclohydrolase family.

It catalyses the reaction GTP + 3 H2O = 2-amino-5-formylamino-6-(5-phospho-D-ribosylamino)pyrimidin-4(3H)-one + 2 phosphate + 2 H(+). Functionally, catalyzes the formation of 2-amino-5-formylamino-6-ribofuranosylamino-4(3H)-pyrimidinone ribonucleotide monophosphate and inorganic phosphate from GTP. Also has an independent pyrophosphate phosphohydrolase activity. The polypeptide is GTP cyclohydrolase III (Pyrobaculum islandicum (strain DSM 4184 / JCM 9189 / GEO3)).